We begin with the raw amino-acid sequence, 59 residues long: Small ribosomal subunit protein bS21 (59 aa).

Residues Lys-40 to Arg-59 are disordered.

This sequence belongs to the bacterial ribosomal protein bS21 family.

The sequence is that of Small ribosomal subunit protein bS21 from Protochlamydia amoebophila (strain UWE25).